A 157-amino-acid chain; its full sequence is 6,7-dimethyl-8-ribityllumazine synthase (157 aa).

Residues F22, 57-59 (AYE), and 81-83 (TVI) contribute to the 5-amino-6-(D-ribitylamino)uracil site. Residue 86–87 (GT) coordinates (2S)-2-hydroxy-3-oxobutyl phosphate. The active-site Proton donor is H89. F114 contributes to the 5-amino-6-(D-ribitylamino)uracil binding site. R128 provides a ligand contact to (2S)-2-hydroxy-3-oxobutyl phosphate.

Belongs to the DMRL synthase family. Forms an icosahedral capsid composed of 60 subunits, arranged as a dodecamer of pentamers.

It carries out the reaction (2S)-2-hydroxy-3-oxobutyl phosphate + 5-amino-6-(D-ribitylamino)uracil = 6,7-dimethyl-8-(1-D-ribityl)lumazine + phosphate + 2 H2O + H(+). It participates in cofactor biosynthesis; riboflavin biosynthesis; riboflavin from 2-hydroxy-3-oxobutyl phosphate and 5-amino-6-(D-ribitylamino)uracil: step 1/2. Catalyzes the formation of 6,7-dimethyl-8-ribityllumazine by condensation of 5-amino-6-(D-ribitylamino)uracil with 3,4-dihydroxy-2-butanone 4-phosphate. This is the penultimate step in the biosynthesis of riboflavin. This chain is 6,7-dimethyl-8-ribityllumazine synthase, found in Histophilus somni (strain 129Pt) (Haemophilus somnus).